The following is a 492-amino-acid chain: MQTSIPNWLMQRAFLTPERIAVYDGQGKKTFMELHESVMKRARQLANTGVRKGDIVAIFMKNSVAMIECIHALHYIGAIVLLQNTRLTSHELAWQLKDSGAVYVIADDELADRIEGNIRVITMSELSALPEENVEFQQYYHFDDIATIMYTSGTTGKPKGVLQTYENHWWSAIGSALNLGLNENDCWLAAVPFFHISGLSIMMRSVIYGMSMYVMRAFDAKKANELIIGGKVTIMSVVSAMLQKMIADLGERRYPETFRCMLLGGGPAPKPLLEVCKAKGIPVYQTYGMTETASQIATLAPEYSLTKLGSAGKPLFPSQLRIEKDGQVARPYEPGEIVVKGPNVTKGYLHRPDATAKAIRGGWFYTGDIGYIDEDGFLYVLDRRSDLIISGGENVYPAEIEAVLLSHEAVEEAGVTGIDDETWGQVPCAFVKRKRGYSVTVEQLKQFCQAHLAKYKIPKQIYFVDELPRNASQKLLRHQLKQLIPNNENGAL.

It belongs to the ATP-dependent AMP-binding enzyme family. MenE subfamily.

It catalyses the reaction 2-succinylbenzoate + ATP + CoA = 2-succinylbenzoyl-CoA + AMP + diphosphate. It functions in the pathway quinol/quinone metabolism; 1,4-dihydroxy-2-naphthoate biosynthesis; 1,4-dihydroxy-2-naphthoate from chorismate: step 5/7. Its pathway is quinol/quinone metabolism; menaquinone biosynthesis. Functionally, converts 2-succinylbenzoate (OSB) to 2-succinylbenzoyl-CoA (OSB-CoA). The sequence is that of 2-succinylbenzoate--CoA ligase from Geobacillus sp. (strain WCH70).